The following is a 540-amino-acid chain: Phosphatidylinositol 4-phosphate 5-kinase type-1 beta (540 aa).

The segment at 1–23 (MSSVTENGDVTAGKPNEEKTYKK) is disordered. Residues 25-395 (TSSAIKGAIQ…RFLKFMNTRV (371 aa)) enclose the PIPK domain.

Its subcellular location is the cytoplasm. The protein localises to the cytosol. The protein resides in the cell membrane. It is found in the endomembrane system. It catalyses the reaction a 1,2-diacyl-sn-glycero-3-phospho-(1D-myo-inositol 4-phosphate) + ATP = a 1,2-diacyl-sn-glycero-3-phospho-(1D-myo-inositol-4,5-bisphosphate) + ADP + H(+). The catalysed reaction is 1-octadecanoyl-2-(5Z,8Z,11Z,14Z)-eicosatetraenoyl-sn-glycero-3-phospho-1D-myo-inositol 4-phosphate + ATP = 1-octadecanoyl-2-(5Z,8Z,11Z,14Z)-eicosatetraenoyl-sn-glycero-3-phospho-1D-myo-inositol 4,5-bisphosphate + ADP + H(+). The enzyme catalyses 1-octadecanoyl-2-(9Z)-octadecenoyl-sn-glycero-3-phospho-1D-myo-inositol 4-phosphate + ATP = 1-octadecanoyl-2-(9Z)-octadecenoyl-sn-glycero-3-phospho-1D-myo-inositol 4,5-bisphosphate + ADP + H(+). It carries out the reaction 1-octadecanoyl-2-(9Z)-octadecenoyl-sn-glycero-3-phospho-1D-myo-inositol + ATP = 1-octadecanoyl-2-(9Z)-octadecenoyl-sn-glycero-3-phospho-1D-myo-inositol 5-phosphate + ADP + H(+). It catalyses the reaction 1-octadecanoyl-2-(9Z,12Z)-octadecadienoyl-sn-glycero-3-phospho-1D-myo-inositol + ATP = 1-octadecanoyl-2-(9Z,12Z)-octadecadienoyl-sn-glycero-3-phospho-1D-myo-inositol 5-phosphate + ADP + H(+). The catalysed reaction is 1-octadecanoyl-2-(5Z,8Z,11Z,14Z-eicosatetraenoyl)-sn-glycero-3-phospho-(1D-myo-inositol) + ATP = 1-octadecanoyl-2-(5Z,8Z,11Z,14Z)-eicosatetraenoyl-sn-glycero-3-phospho-1D-myo-inositol 5-phosphate + ADP + H(+). The enzyme catalyses 1,2-di-(9Z,12Z)-octadecadienoyl-sn-glycero-3-phospho-1D-myo-inositol + ATP = 1,2-di(9Z,12Z)-octadecadienoyl-sn-glycero-3-phospho-1D-myo-inositol 5-phosphate + ADP + H(+). Functionally, catalyzes the phosphorylation of phosphatidylinositol 4-phosphate (PtdIns(4)P/PI4P) to form phosphatidylinositol 4,5-bisphosphate (PtdIns(4,5)P2/PIP2), a lipid second messenger that regulates several cellular processes such as signal transduction, vesicle trafficking, actin cytoskeleton dynamics, cell adhesion, and cell motility. PtdIns(4,5)P2 can directly act as a second messenger or can be utilized as a precursor to generate other second messengers: inositol 1,4,5-trisphosphate (IP3), diacylglycerol (DAG) or phosphatidylinositol-3,4,5-trisphosphate (PtdIns(3,4,5)P3/PIP3). This is Phosphatidylinositol 4-phosphate 5-kinase type-1 beta (PIP5K1B) from Gallus gallus (Chicken).